The following is a 248-amino-acid chain: 3-deoxy-manno-octulosonate cytidylyltransferase (248 aa).

The protein belongs to the KdsB family.

It is found in the cytoplasm. It carries out the reaction 3-deoxy-alpha-D-manno-oct-2-ulosonate + CTP = CMP-3-deoxy-beta-D-manno-octulosonate + diphosphate. It participates in nucleotide-sugar biosynthesis; CMP-3-deoxy-D-manno-octulosonate biosynthesis; CMP-3-deoxy-D-manno-octulosonate from 3-deoxy-D-manno-octulosonate and CTP: step 1/1. Its pathway is bacterial outer membrane biogenesis; lipopolysaccharide biosynthesis. Its function is as follows. Activates KDO (a required 8-carbon sugar) for incorporation into bacterial lipopolysaccharide in Gram-negative bacteria. This chain is 3-deoxy-manno-octulosonate cytidylyltransferase, found in Salmonella enteritidis PT4 (strain P125109).